The following is a 76-amino-acid chain: MAYRESFYRYLMTQRDADSSDEVAQFANNAQHDLTFPKQEQDYEELSDYLELNASYLPSMSVFDRAYKMYEEKMMY.

Belongs to the UPF0346 family.

This chain is UPF0346 protein LBA0976, found in Lactobacillus acidophilus (strain ATCC 700396 / NCK56 / N2 / NCFM).